A 463-amino-acid chain; its full sequence is Probable Xaa-Pro aminopeptidase pepP (463 aa).

Positions 259, 270, 393, and 433 each coordinate Mn(2+).

It belongs to the peptidase M24B family. Mn(2+) is required as a cofactor.

The catalysed reaction is Release of any N-terminal amino acid, including proline, that is linked to proline, even from a dipeptide or tripeptide.. In terms of biological role, catalyzes the removal of a penultimate prolyl residue from the N-termini of peptides. This Pyrenophora teres f. teres (strain 0-1) (Barley net blotch fungus) protein is Probable Xaa-Pro aminopeptidase pepP (pepP).